A 521-amino-acid polypeptide reads, in one-letter code: uncharacterized protein (521 aa).

Residues 1–25 (MLQRSLGVNGRKLAMSARSAKRERK) form a disordered region. Helical transmembrane passes span 68 to 88 (GAVW…GAVL), 114 to 134 (VLIV…SLTV), 160 to 180 (VVLA…HTVG), 192 to 212 (VAVT…IYFL), 290 to 310 (ALLV…GWCW), and 399 to 419 (LLFW…CAQI).

Its subcellular location is the cell membrane. This is an uncharacterized protein from Mycobacterium tuberculosis (strain CDC 1551 / Oshkosh).